Reading from the N-terminus, the 264-residue chain is Thymidylate synthase 2 (264 aa).

Residue Arg21 participates in dUMP binding. His51 serves as a coordination point for (6R)-5,10-methylene-5,6,7,8-tetrahydrofolate. 126-127 (RR) is a dUMP binding site. Catalysis depends on Cys146, which acts as the Nucleophile. DUMP is bound by residues 166 to 169 (RSAD), Asn177, and 207 to 209 (HIY). Asp169 provides a ligand contact to (6R)-5,10-methylene-5,6,7,8-tetrahydrofolate. Ser263 contacts (6R)-5,10-methylene-5,6,7,8-tetrahydrofolate.

It belongs to the thymidylate synthase family. Bacterial-type ThyA subfamily. Homodimer.

The protein localises to the cytoplasm. The enzyme catalyses dUMP + (6R)-5,10-methylene-5,6,7,8-tetrahydrofolate = 7,8-dihydrofolate + dTMP. It participates in pyrimidine metabolism; dTTP biosynthesis. Its function is as follows. Catalyzes the reductive methylation of 2'-deoxyuridine-5'-monophosphate (dUMP) to 2'-deoxythymidine-5'-monophosphate (dTMP) while utilizing 5,10-methylenetetrahydrofolate (mTHF) as the methyl donor and reductant in the reaction, yielding dihydrofolate (DHF) as a by-product. This enzymatic reaction provides an intracellular de novo source of dTMP, an essential precursor for DNA biosynthesis. The polypeptide is Thymidylate synthase 2 (Bacillus spizizenii (strain ATCC 23059 / NRRL B-14472 / W23) (Bacillus subtilis subsp. spizizenii)).